A 639-amino-acid chain; its full sequence is Mediator of RNA polymerase II transcription subunit 17 (639 aa).

The protein belongs to the Mediator complex subunit 17 family. In terms of assembly, component of the Mediator complex.

The protein localises to the nucleus. Component of the Mediator complex, a coactivator involved in the regulated transcription of nearly all RNA polymerase II-dependent genes. Mediator functions as a bridge to convey information from gene-specific regulatory proteins to the basal RNA polymerase II transcription machinery. Mediator is recruited to promoters by direct interactions with regulatory proteins and serves as a scaffold for the assembly of a functional preinitiation complex with RNA polymerase II and the general transcription factors. The chain is Mediator of RNA polymerase II transcription subunit 17 (med17) from Xenopus tropicalis (Western clawed frog).